A 144-amino-acid chain; its full sequence is Cytochrome c-type biogenesis protein CcmE (144 aa).

The Cytoplasmic portion of the chain corresponds to 1 to 7; that stretch reads MTRKQKR. Residues 8–28 traverse the membrane as a helical; Signal-anchor for type II membrane protein segment; sequence LAVIGSGMGFLALAAALTFYA. The Periplasmic segment spans residues 29 to 144; that stretch reads LGQQTSYFYM…LKKDGLWQEQ (116 aa). 2 residues coordinate heme: histidine 122 and tyrosine 126.

This sequence belongs to the CcmE/CycJ family.

Its subcellular location is the cell inner membrane. In terms of biological role, heme chaperone required for the biogenesis of c-type cytochromes. Transiently binds heme delivered by CcmC and transfers the heme to apo-cytochromes in a process facilitated by CcmF and CcmH. The polypeptide is Cytochrome c-type biogenesis protein CcmE (Chelativorans sp. (strain BNC1)).